Reading from the N-terminus, the 307-residue chain is 4-hydroxythreonine-4-phosphate dehydrogenase (307 aa).

Residues histidine 126 and threonine 127 each coordinate substrate. A divalent metal cation contacts are provided by histidine 156, histidine 195, and histidine 251. Positions 259, 268, and 277 each coordinate substrate.

Belongs to the PdxA family. In terms of assembly, homodimer. Requires Zn(2+) as cofactor. It depends on Mg(2+) as a cofactor. Co(2+) serves as cofactor.

It is found in the cytoplasm. The catalysed reaction is 4-(phosphooxy)-L-threonine + NAD(+) = 3-amino-2-oxopropyl phosphate + CO2 + NADH. It functions in the pathway cofactor biosynthesis; pyridoxine 5'-phosphate biosynthesis; pyridoxine 5'-phosphate from D-erythrose 4-phosphate: step 4/5. In terms of biological role, catalyzes the NAD(P)-dependent oxidation of 4-(phosphooxy)-L-threonine (HTP) into 2-amino-3-oxo-4-(phosphooxy)butyric acid which spontaneously decarboxylates to form 3-amino-2-oxopropyl phosphate (AHAP). The protein is 4-hydroxythreonine-4-phosphate dehydrogenase of Helicobacter pylori (strain HPAG1).